Reading from the N-terminus, the 187-residue chain is Elongation factor P 2 (187 aa).

It belongs to the elongation factor P family.

It is found in the cytoplasm. The protein operates within protein biosynthesis; polypeptide chain elongation. Its function is as follows. Involved in peptide bond synthesis. Stimulates efficient translation and peptide-bond synthesis on native or reconstituted 70S ribosomes in vitro. Probably functions indirectly by altering the affinity of the ribosome for aminoacyl-tRNA, thus increasing their reactivity as acceptors for peptidyl transferase. This is Elongation factor P 2 from Geobacter sulfurreducens (strain ATCC 51573 / DSM 12127 / PCA).